The following is a 363-amino-acid chain: GTPase Obg (363 aa).

The region spanning 1–159 (MKFLDEAKVY…KTIWLRLKLI (159 aa)) is the Obg domain. An OBG-type G domain is found at 160-327 (ADAGLVGLPN…VLRALRDIIV (168 aa)). Residues 166–173 (GLPNAGKS), 191–195 (FTTLH), 212–215 (DIPG), 279–282 (SQID), and 308–310 (SAV) each bind GTP. Mg(2+) is bound by residues S173 and T193. The disordered stretch occupies residues 332 to 363 (EEKPAKAPKLRHRDMIVSEENNQGEDGADDQP). The segment covering 353–363 (NQGEDGADDQP) has biased composition (acidic residues).

The protein belongs to the TRAFAC class OBG-HflX-like GTPase superfamily. OBG GTPase family. As to quaternary structure, monomer. Requires Mg(2+) as cofactor.

It localises to the cytoplasm. Functionally, an essential GTPase which binds GTP, GDP and possibly (p)ppGpp with moderate affinity, with high nucleotide exchange rates and a fairly low GTP hydrolysis rate. Plays a role in control of the cell cycle, stress response, ribosome biogenesis and in those bacteria that undergo differentiation, in morphogenesis control. The chain is GTPase Obg from Rhizobium etli (strain ATCC 51251 / DSM 11541 / JCM 21823 / NBRC 15573 / CFN 42).